The chain runs to 629 residues: Methyl-accepting chemotaxis protein PscA (629 aa).

The Cytoplasmic segment spans residues 1 to 9; that stretch reads MKNLGFSKK. Residues 10-30 form a helical membrane-spanning segment; sequence ILLAAALIVVVAFSVFIVIND. The Periplasmic portion of the chain corresponds to 31–276; that stretch reads YRQRQSLKSS…AYAMLTEFRT (246 aa). Positions 36-258 constitute a Cache domain; the sequence is SLKSSVKSEL…QGVATANWYV (223 aa). A helical membrane pass occupies residues 277 to 297; the sequence is SAITAMVVVVMVIILLLGPLI. The 55-residue stretch at 298–352 folds into the HAMP domain; it reads RVLMQPLHQMGRAMRDIADGEGDLTKRLAITSHDEFGALAESFNHFVERIHTSIR. Topologically, residues 298–629 are cytoplasmic; it reads RVLMQPLHQM…LQQLVGSFRI (332 aa). Residues 357–593 form the Methyl-accepting transducer domain; the sequence is TAAQLGEVAT…SINVDITHIN (237 aa).

This sequence belongs to the methyl-accepting chemotaxis (MCP) protein family.

It is found in the cell inner membrane. Chemotactic-signal transducers respond to changes in the concentration of attractants and repellents in the environment, transduce a signal from the outside to the inside of the cell, and facilitate sensory adaptation through the variation of the level of methylation. PscA recognizes specifically and with high affinity L-Asp, D-Asp and L-Glu. It exerts a double function, in mediating chemotaxis to these amino acids and in modulating cyclic di-GMP (c-di-GMP) levels, causing alterations in biofilm development. Plays a key role in the infection process. It may facilitate bacterial entry into the plant. This Pseudomonas syringae pv. tomato (strain ATCC BAA-871 / DC3000) protein is Methyl-accepting chemotaxis protein PscA.